Here is a 122-residue protein sequence, read N- to C-terminus: Large ribosomal subunit protein uL14c (122 aa).

The protein belongs to the universal ribosomal protein uL14 family. Part of the 50S ribosomal subunit.

The protein localises to the plastid. It is found in the chloroplast. In terms of biological role, binds to 23S rRNA. In Populus alba (White poplar), this protein is Large ribosomal subunit protein uL14c.